We begin with the raw amino-acid sequence, 293 residues long: Succinate--CoA ligase [ADP-forming] subunit alpha (293 aa).

Residues 21 to 24 (TGKQ), K47, and 99 to 101 (ITE) each bind CoA. Position 162 (Y162) interacts with substrate. The active-site Tele-phosphohistidine intermediate is H249.

The protein belongs to the succinate/malate CoA ligase alpha subunit family. As to quaternary structure, heterotetramer of two alpha and two beta subunits.

It carries out the reaction succinate + ATP + CoA = succinyl-CoA + ADP + phosphate. It catalyses the reaction GTP + succinate + CoA = succinyl-CoA + GDP + phosphate. Its pathway is carbohydrate metabolism; tricarboxylic acid cycle; succinate from succinyl-CoA (ligase route): step 1/1. Succinyl-CoA synthetase functions in the citric acid cycle (TCA), coupling the hydrolysis of succinyl-CoA to the synthesis of either ATP or GTP and thus represents the only step of substrate-level phosphorylation in the TCA. The alpha subunit of the enzyme binds the substrates coenzyme A and phosphate, while succinate binding and nucleotide specificity is provided by the beta subunit. This is Succinate--CoA ligase [ADP-forming] subunit alpha from Methanothermobacter thermautotrophicus (strain ATCC 29096 / DSM 1053 / JCM 10044 / NBRC 100330 / Delta H) (Methanobacterium thermoautotrophicum).